Consider the following 49-residue polypeptide: uncharacterized protein (49 aa).

The helical transmembrane segment at L5 to I25 threads the bilayer.

This sequence belongs to the plectrovirus ORF12 protein family.

Its subcellular location is the host membrane. This is an uncharacterized protein from Spiroplasma virus SpV1-R8A2 B (SpV1).